Here is a 270-residue protein sequence, read N- to C-terminus: 4-hydroxy-tetrahydrodipicolinate reductase (270 aa).

NAD(+) is bound by residues 11–16 (GAGGRM) and Glu37. Arg38 provides a ligand contact to NADP(+). Residues 101 to 103 (GTT) and 125 to 128 (APNM) contribute to the NAD(+) site. Catalysis depends on His158, which acts as the Proton donor/acceptor. His159 contacts (S)-2,3,4,5-tetrahydrodipicolinate. Lys162 (proton donor) is an active-site residue. 168-169 (GT) provides a ligand contact to (S)-2,3,4,5-tetrahydrodipicolinate.

It belongs to the DapB family.

Its subcellular location is the cytoplasm. The enzyme catalyses (S)-2,3,4,5-tetrahydrodipicolinate + NAD(+) + H2O = (2S,4S)-4-hydroxy-2,3,4,5-tetrahydrodipicolinate + NADH + H(+). It carries out the reaction (S)-2,3,4,5-tetrahydrodipicolinate + NADP(+) + H2O = (2S,4S)-4-hydroxy-2,3,4,5-tetrahydrodipicolinate + NADPH + H(+). It participates in amino-acid biosynthesis; L-lysine biosynthesis via DAP pathway; (S)-tetrahydrodipicolinate from L-aspartate: step 4/4. Its function is as follows. Catalyzes the conversion of 4-hydroxy-tetrahydrodipicolinate (HTPA) to tetrahydrodipicolinate. The protein is 4-hydroxy-tetrahydrodipicolinate reductase of Shewanella sp. (strain MR-4).